The following is a 293-amino-acid chain: Ribosomal protein L11 methyltransferase (293 aa).

S-adenosyl-L-methionine contacts are provided by Thr-145, Gly-166, Asp-188, and Asn-230.

It belongs to the methyltransferase superfamily. PrmA family.

It localises to the cytoplasm. The catalysed reaction is L-lysyl-[protein] + 3 S-adenosyl-L-methionine = N(6),N(6),N(6)-trimethyl-L-lysyl-[protein] + 3 S-adenosyl-L-homocysteine + 3 H(+). Functionally, methylates ribosomal protein L11. In Shewanella baltica (strain OS223), this protein is Ribosomal protein L11 methyltransferase.